A 432-amino-acid chain; its full sequence is Enolase (432 aa).

Q167 provides a ligand contact to (2R)-2-phosphoglycerate. The active-site Proton donor is E209. Positions 246, 290, and 317 each coordinate Mg(2+). (2R)-2-phosphoglycerate-binding residues include K342, R371, S372, and K393. K342 serves as the catalytic Proton acceptor.

It belongs to the enolase family. As to quaternary structure, component of the RNA degradosome, a multiprotein complex involved in RNA processing and mRNA degradation. The cofactor is Mg(2+).

Its subcellular location is the cytoplasm. The protein localises to the secreted. The protein resides in the cell surface. The enzyme catalyses (2R)-2-phosphoglycerate = phosphoenolpyruvate + H2O. It functions in the pathway carbohydrate degradation; glycolysis; pyruvate from D-glyceraldehyde 3-phosphate: step 4/5. Its function is as follows. Catalyzes the reversible conversion of 2-phosphoglycerate (2-PG) into phosphoenolpyruvate (PEP). It is essential for the degradation of carbohydrates via glycolysis. The sequence is that of Enolase from Klebsiella pneumoniae (strain 342).